A 338-amino-acid chain; its full sequence is MERLLDNKFSIEDVHEESLRPKTLEDYIGQQKVKEKIKIFIEAAKKRKEPLDHVLLYGPPGLGKTTLANIIANEMGVDIKVTSGPAIERAGDLVAILTNIGENNILFIDEIHRLNRTIEEVLYPAMEDKKVDIVIGKGPSAKTIRLTLPPFTLIGATTRAGLLSSPLRDRFGIIERLDYYTVEELSQIVMRSASILKCDIEKEACIEIAKRSRGTPRVANRLLRRLRDYAMVKHTGSITYEVAKSGLEMFEVDEYGLDLVDRNILEAIVYKFGGGPVGLSTIAAAIGEDEGTIEDIYEPYLIQEGFLVKTARGRVATQKAINHIAKIKFNVKESGDKR.

The segment at 1 to 180 is large ATPase domain (RuvB-L); sequence MERLLDNKFS…FGIIERLDYY (180 aa). The ATP site is built by Leu-19, Arg-20, Gly-61, Lys-64, Thr-65, Thr-66, Arg-170, Tyr-180, and Arg-217. Thr-65 lines the Mg(2+) pocket. Residues 181–251 are small ATPAse domain (RuvB-S); it reads TVEELSQIVM…VAKSGLEMFE (71 aa). The segment at 254 to 338 is head domain (RuvB-H); the sequence is EYGLDLVDRN…FNVKESGDKR (85 aa). DNA-binding residues include Lys-309 and Arg-314.

This sequence belongs to the RuvB family. In terms of assembly, homohexamer. Forms an RuvA(8)-RuvB(12)-Holliday junction (HJ) complex. HJ DNA is sandwiched between 2 RuvA tetramers; dsDNA enters through RuvA and exits via RuvB. An RuvB hexamer assembles on each DNA strand where it exits the tetramer. Each RuvB hexamer is contacted by two RuvA subunits (via domain III) on 2 adjacent RuvB subunits; this complex drives branch migration. In the full resolvosome a probable DNA-RuvA(4)-RuvB(12)-RuvC(2) complex forms which resolves the HJ.

The protein resides in the cytoplasm. It catalyses the reaction ATP + H2O = ADP + phosphate + H(+). Functionally, the RuvA-RuvB-RuvC complex processes Holliday junction (HJ) DNA during genetic recombination and DNA repair, while the RuvA-RuvB complex plays an important role in the rescue of blocked DNA replication forks via replication fork reversal (RFR). RuvA specifically binds to HJ cruciform DNA, conferring on it an open structure. The RuvB hexamer acts as an ATP-dependent pump, pulling dsDNA into and through the RuvAB complex. RuvB forms 2 homohexamers on either side of HJ DNA bound by 1 or 2 RuvA tetramers; 4 subunits per hexamer contact DNA at a time. Coordinated motions by a converter formed by DNA-disengaged RuvB subunits stimulates ATP hydrolysis and nucleotide exchange. Immobilization of the converter enables RuvB to convert the ATP-contained energy into a lever motion, pulling 2 nucleotides of DNA out of the RuvA tetramer per ATP hydrolyzed, thus driving DNA branch migration. The RuvB motors rotate together with the DNA substrate, which together with the progressing nucleotide cycle form the mechanistic basis for DNA recombination by continuous HJ branch migration. Branch migration allows RuvC to scan DNA until it finds its consensus sequence, where it cleaves and resolves cruciform DNA. This is Holliday junction branch migration complex subunit RuvB from Caldicellulosiruptor saccharolyticus (strain ATCC 43494 / DSM 8903 / Tp8T 6331).